A 294-amino-acid polypeptide reads, in one-letter code: MTVDFGRVLTAMVSPFDKNMELNLPMARKLARHLVDSGSDGLVVCGTTGESPTLSKEEKLELFRTVVDEVGGRAVVVAGTGSYSTKDSIALTQAAEKLGVDAVMLVCPYYNKPSQDGLYQHFRAVAESTNLPVMIYNIPGRTSINLLPQTCARLAEIGNIVAIKEASGNMDQATELRRLLPDHFHIYSGDDSMTLPLLAVGGKGVVSVAAHLVGGKIQEMINAFTSGNITLAAKLHSSLFPLIKGLFMTTNPVPVKAALGMLGLNVGPPRLPLVEATEQEKEKLRVLLREAQLL.

Residue Thr-48 participates in pyruvate binding. Tyr-136 (proton donor/acceptor) is an active-site residue. Catalysis depends on Lys-164, which acts as the Schiff-base intermediate with substrate. Val-206 contacts pyruvate.

It belongs to the DapA family. In terms of assembly, homotetramer; dimer of dimers.

It localises to the cytoplasm. The enzyme catalyses L-aspartate 4-semialdehyde + pyruvate = (2S,4S)-4-hydroxy-2,3,4,5-tetrahydrodipicolinate + H2O + H(+). The protein operates within amino-acid biosynthesis; L-lysine biosynthesis via DAP pathway; (S)-tetrahydrodipicolinate from L-aspartate: step 3/4. Functionally, catalyzes the condensation of (S)-aspartate-beta-semialdehyde [(S)-ASA] and pyruvate to 4-hydroxy-tetrahydrodipicolinate (HTPA). The chain is 4-hydroxy-tetrahydrodipicolinate synthase from Desulforudis audaxviator (strain MP104C).